The primary structure comprises 131 residues: Methylglyoxal synthase (131 aa).

Residues 1 to 131 enclose the MGS-like domain; sequence MKIALIAHDK…GDLDYRKLRK (131 aa). Substrate-binding positions include H8, K12, 34–37, and 54–55; these read TGTT and SG. D60 (proton donor/acceptor) is an active-site residue. Residue H87 participates in substrate binding.

Belongs to the methylglyoxal synthase family.

The catalysed reaction is dihydroxyacetone phosphate = methylglyoxal + phosphate. In terms of biological role, catalyzes the formation of methylglyoxal from dihydroxyacetone phosphate. This Bacillus mycoides (strain KBAB4) (Bacillus weihenstephanensis) protein is Methylglyoxal synthase.